Consider the following 88-residue polypeptide: Small cysteine and glycine repeat-containing protein 1 (88 aa).

The tract at residues 4-72 (CGCGGCGGCG…TCSSCGYSCG (69 aa)) is 10 X 2 AA repeats of CG.

It belongs to the KRTAP type 28 family.

Its function is as follows. In the hair cortex, hair keratin intermediate filaments are embedded in an interfilamentous matrix, consisting of hair keratin-associated proteins (KRTAP), which are essential for the formation of a rigid and resistant hair shaft through their extensive disulfide bond cross-linking with abundant cysteine residues of hair keratins. The matrix proteins include the high-sulfur and high-glycine-tyrosine keratins. This is Small cysteine and glycine repeat-containing protein 1 from Homo sapiens (Human).